The following is a 419-amino-acid chain: AT-hook motif nuclear-localized protein 4 (419 aa).

3 disordered regions span residues 1 to 168 (MEER…SGGG), 301 to 337 (QQQQQQIKKQRRERLGIPTTTQASNISFGGSAEDPKA), and 382 to 419 (DLFSSLPGEDREEDEDDLEGEDDEEFGGHSESDTEVPS). The short motif at 78–86 (KKKRGRPRK) is the Bipartite nuclear localization signal element. Positions 78 to 90 (KKKRGRPRKYNPD) form a DNA-binding region, a.T hook. A compositionally biased stretch (polar residues) spans 101-112 (PISSSVPLTSEF). The segment covering 115-130 (RKRGRGRGRGRGRGRG) has biased composition (basic residues). Positions 136 to 148 (GSREPNNNNNDNN) are enriched in low complexity. The PPC domain occupies 174-314 (VSPSFTPHVL…QQIKKQRRER (141 aa)). Residues 318-328 (PTTTQASNISF) show a composition bias toward polar residues. Over residues 391 to 406 (DREEDEDDLEGEDDEE) the composition is skewed to acidic residues.

As to quaternary structure, homodimer. Interacts with AHL3. Predominantly expressed in the stele of the root meristem with a specificity to the procambium.

The protein resides in the nucleus. Transcription factor that specifically binds AT-rich DNA sequences related to the nuclear matrix attachment regions (MARs). Acts redundantly with AHL3 to regulate the formation of tissue boundary between the xylem and procambium in the root meristem. Cell-to-cell movement of AHL4 from the procambium to the xylem is critical for its function in root vascular patterning. The sequence is that of AT-hook motif nuclear-localized protein 4 from Arabidopsis thaliana (Mouse-ear cress).